Here is a 399-residue protein sequence, read N- to C-terminus: CLOCK-interacting pacemaker (399 aa).

Residues 1-12 are compositionally biased toward basic and acidic residues; it reads MERKNSSRESPR. Disordered stretches follow at residues 1–85 and 159–224; these read MERK…AKNA and SYTK…KLAE. Residue Ser-213 is modified to Phosphoserine. Residues 333 to 359 adopt a coiled-coil conformation; sequence TLKTKELIRQNQATQVELDQLKEQTQL. Residues 378 to 388 show a composition bias toward polar residues; that stretch reads SLTPGSSNTGS. The disordered stretch occupies residues 378 to 399; the sequence is SLTPGSSNTGSDLEAFSDHPDI.

Interacts with CLOCK. Forms a ternary complex with the CLOCK-BMAL1 heterodimer. Interacts with CAD and HSPA5.

The protein resides in the nucleus. It localises to the cytoplasm. It is found in the cytosol. Its function is as follows. Transcriptional repressor which may act as a negative-feedback regulator of CLOCK-BMAL1 transcriptional activity in the circadian-clock mechanism. May stimulate BMAL1-dependent phosphorylation of CLOCK. However, the physiological relevance of these observations is unsure, since experiments in knockout mice showed that CIPC is not critially required for basic circadian clock. In Pongo abelii (Sumatran orangutan), this protein is CLOCK-interacting pacemaker (CIPC).